The primary structure comprises 387 residues: Probable serine/threonine-protein kinase PBL18 (387 aa).

Positions 1 to 37 (MGNCLDSSARVGNRESTFGGSSRISRKPNQSSRLSSL) are disordered. The N-myristoyl glycine moiety is linked to residue Gly2. The S-palmitoyl cysteine moiety is linked to residue Cys4. Positions 14–37 (RESTFGGSSRISRKPNQSSRLSSL) are enriched in polar residues. Thr73 is modified (phosphothreonine). Residues 84–365 (FKPNSMIGEG…ADVLSTLQQL (282 aa)) enclose the Protein kinase domain. ATP is bound by residues 90–98 (IGEGGFGCV) and Lys122. Residue Tyr167 is modified to Phosphotyrosine. Asp215 functions as the Proton acceptor in the catalytic mechanism. At Ser219 the chain carries Phosphoserine. 2 positions are modified to phosphothreonine: Thr250 and Thr255. Tyr263 carries the phosphotyrosine modification. Residues 368 to 387 (SSKKMGSTQNIVMSPSSHMS) are disordered.

The protein belongs to the protein kinase superfamily. Ser/Thr protein kinase family.

Its subcellular location is the cell membrane. It carries out the reaction L-seryl-[protein] + ATP = O-phospho-L-seryl-[protein] + ADP + H(+). It catalyses the reaction L-threonyl-[protein] + ATP = O-phospho-L-threonyl-[protein] + ADP + H(+). In terms of biological role, may be involved in plant defense signaling. The protein is Probable serine/threonine-protein kinase PBL18 of Arabidopsis thaliana (Mouse-ear cress).